A 309-amino-acid chain; its full sequence is Olfactory receptor 5H2 (309 aa).

The Extracellular portion of the chain corresponds to 1 to 28; sequence MEQDNTTLLTEFVLTGLTYQPEWKMPLF. N5 is a glycosylation site (N-linked (GlcNAc...) asparagine). The helical transmembrane segment at 29-49 threads the bilayer; that stretch reads LVFLVIYLITIVWNLGLIALI. Over 50–56 the chain is Cytoplasmic; sequence WNDPQLH. The chain crosses the membrane as a helical span at residues 57-77; sequence IPMYFFLGSLAFVDAWISSTV. Over 78–97 the chain is Extracellular; the sequence is TPKMLVNFLAKNRMISLSEC. An intrachain disulfide couples C97 to C179. A helical transmembrane segment spans residues 98–118; sequence MIQFFSFAFGGTTECFLLATM. The Cytoplasmic segment spans residues 119–143; it reads AYDRYVAICKPLLYPVIMNNSLCIR. Residues 144–164 form a helical membrane-spanning segment; it reads LLAFSFLGGFLHALIHEVLIF. Residues 165–193 are Extracellular-facing; it reads RLTFCNSNIIHHFYCDIIPLFMISCTDPS. A helical membrane pass occupies residues 194 to 214; that stretch reads INFLMVFILSGSIQVFTIVTV. Residues 215–239 are Cytoplasmic-facing; the sequence is LNSYTFALFTILKKKSVRGVRKAFS. The chain crosses the membrane as a helical span at residues 240-260; that stretch reads TCGAHLLSVSLYYGPLIFMYL. At 261–271 the chain is on the extracellular side; sequence RPASPQADDQD. A helical transmembrane segment spans residues 272–292; that stretch reads MIDSVFYTIIIPLLNPIIYSL. The Cytoplasmic segment spans residues 293-309; that stretch reads RNKQVIDSFTKMVKRNV.

Belongs to the G-protein coupled receptor 1 family.

The protein resides in the cell membrane. Odorant receptor. In Homo sapiens (Human), this protein is Olfactory receptor 5H2 (OR5H2).